Here is a 98-residue protein sequence, read N- to C-terminus: Cystatin-B (98 aa).

M1 is modified (N-acetylmethionine). Residues 46-50 (QVVAG) carry the Secondary area of contact motif.

It belongs to the cystatin family.

It localises to the cytoplasm. Functionally, this is an intracellular thiol proteinase inhibitor. The polypeptide is Cystatin-B (CSTB) (Sus scrofa (Pig)).